The primary structure comprises 114 residues: Progonadoliberin-2 (114 aa).

The N-terminal stretch at 1 to 25 (MASSMLGFLLLLLLLMAAHPGPSEA) is a signal peptide. Positions 22–80 (PSEAQHWSHGWYPGGKRASNSPQDPQSALRPPAPSAAQTAHSFRSAALASPEDSVPWEG) are disordered. Glycine amide is present on G35.

Belongs to the GnRH family. In terms of tissue distribution, midbrain.

The protein resides in the secreted. Its function is as follows. Stimulates the secretion of gonadotropins; it stimulates the secretion of both luteinizing and follicle-stimulating hormones. The sequence is that of Progonadoliberin-2 (GNRH2) from Tupaia belangeri (Common tree shrew).